Here is a 628-residue protein sequence, read N- to C-terminus: Chaperone protein HtpG (628 aa).

The segment at 1 to 340 (MSTETLQKET…SADLPLNVSR (340 aa)) is a; substrate-binding. The segment at 341–557 (EILQHSKDIE…EHDLSGNLER (217 aa)) is b. Residues 558–628 (LLKAAGQKTP…FVRRVNAMLA (71 aa)) are c.

This sequence belongs to the heat shock protein 90 family. Homodimer.

Its subcellular location is the cytoplasm. Molecular chaperone. Has ATPase activity. The sequence is that of Chaperone protein HtpG from Methylobacillus flagellatus (strain ATCC 51484 / DSM 6875 / VKM B-1610 / KT).